The chain runs to 248 residues: Allergin-1 (248 aa).

The first 33 residues, 1–33, serve as a signal peptide directing secretion; sequence MGDDDTPVCLSVASCKGVSCWLDKLLLWALTLS. Topologically, residues 34 to 150 are extracellular; it reads ITLRNTAVDC…DESCSSCLLS (117 aa). An Ig-like C2-type domain is found at 54 to 137; the sequence is PNLNSSMSVV…SKYSQNFNFT (84 aa). Asn-68 is a glycosylation site (N-linked (GlcNAc...) asparagine). Cysteines 73 and 120 form a disulfide. A glycan (N-linked (GlcNAc...) asparagine) is linked at Asn-135. The helical transmembrane segment at 151-171 threads the bilayer; sequence LLLPGVLLGLILPGLAFLIYL. Residues 172–248 lie on the Cytoplasmic side of the membrane; sequence KYKKGCTGKT…DDYIYSELTY (77 aa). Short sequence motifs (ITIM motif) lie at residues 216–221 and 241–246; these read IHYTTP and YIYSEL. 2 positions are modified to phosphotyrosine: Tyr-218 and Tyr-243.

As to quaternary structure, monomer. Interacts (tyrosine-phosphorylated) with PTPN6, PTPN11 and INPP5D. Post-translationally, N-glycosylated. As to expression, mast cell-specific. Expressed in primary and transformed mast cells.

Its subcellular location is the cell membrane. Its function is as follows. Immunoglobulin-like receptor which plays an inhibitory role in degranulation of mast cells. Negatively regulates IgE-mediated mast cell activation and suppresses the type I immediate hypersensitivity reaction. In Rattus norvegicus (Rat), this protein is Allergin-1 (Milr1).